The following is a 225-amino-acid chain: Transcriptional activator protein CUP2 (225 aa).

The copper-fist DNA-binding region spans 1–40 (MVVINGVKYACETCIRGHRAAQCTHTDGPLQMIRRKGRPS). Residues 1 to 108 (MVVINGVKYA…KSKGGSCHRR (108 aa)) form a binds copper and DNA region. 4 residues coordinate Zn(2+): Cys-11, Cys-14, Cys-23, and His-25. The tract at residues 109–225 (ANDEAAHVNG…QVSSHNSHSQ (117 aa)) is required for transcriptional activation.

It localises to the nucleus. In terms of biological role, trans-acting regulatory protein that activates transcription of the CUP1 gene (metallothionein) in response to copper ions. Binds to the CUP1 UAS sequence 5'-GCTTCTTTTCCGCTGA-3'. Binds DNA only in presence of copper or silver. Copper seems to alter the conformation of the protein. The protein is Transcriptional activator protein CUP2 (CUP2) of Saccharomyces cerevisiae (strain ATCC 204508 / S288c) (Baker's yeast).